The primary structure comprises 403 residues: Ribonuclease T2-like (403 aa).

The N-terminal stretch at 1–19 is a signal peptide; it reads MLALILTISICIFLKGSTC. 4 cysteine pairs are disulfide-bonded: Cys36–Cys55, Cys44–Cys91, Cys54–Cys158, and Cys99–Cys150. Residue Asn78 is glycosylated (N-linked (GlcNAc...) asparagine). Catalysis depends on residues His84, Glu143, and His147. Residue Asn175 is glycosylated (N-linked (GlcNAc...) asparagine). Residues Cys224 and Cys259 are joined by a disulfide bond. The segment at 268-288 is disordered; it reads PKNGFNPGPQPPKSPRKGYLE.

It belongs to the RNase T2 family.

Its subcellular location is the vacuole lumen. The protein resides in the cytoplasm. The catalysed reaction is a ribonucleotidyl-ribonucleotide-RNA + H2O = a 3'-end 3'-phospho-ribonucleotide-RNA + a 5'-end dephospho-ribonucleoside-RNA + H(+). Functionally, rnase which modulates cell survival under stress conditions. Released from the vacuole to the cytoplasm during stress to promote tRNA and rRNA cleavage and to activate separately a downstream pathway that promotes cell death. Involved in cell size, vacuolar morphology and growth at high temperatures and high salt concentration. This chain is Ribonuclease T2-like (RNY1), found in Debaryomyces hansenii (strain ATCC 36239 / CBS 767 / BCRC 21394 / JCM 1990 / NBRC 0083 / IGC 2968) (Yeast).